Here is a 234-residue protein sequence, read N- to C-terminus: RNA chaperone ProQ (234 aa).

Basic and acidic residues predominate over residues 104-130 (LEEAKARVQAQRDARKREAAENGEKRE). Positions 104–186 (LEEAKARVQA…QRSTPVTSLE (83 aa)) are disordered. A compositionally biased stretch (basic residues) spans 131–142 (PRRPRPAGKKPT). Basic and acidic residues-rich tracts occupy residues 143–156 (ARRD…EVRK) and 163–176 (TSER…ETTE). Polar residues predominate over residues 177 to 186 (QRSTPVTSLE).

Belongs to the ProQ family.

Its subcellular location is the cytoplasm. RNA chaperone with significant RNA binding, RNA strand exchange and RNA duplexing activities. May regulate ProP activity through an RNA-based, post-transcriptional mechanism. The sequence is that of RNA chaperone ProQ from Edwardsiella ictaluri (strain 93-146).